A 338-amino-acid chain; its full sequence is tRNA methyltransferase 10 homolog A (338 aa).

Disordered regions lie at residues 1–91 (MSSE…DRKR) and 296–338 (RVEG…SVPH). S22 carries the phosphoserine modification. A coiled-coil region spans residues 52–80 (KQWEEQRELRKQKRKEKRKRKQLERQCQP). Residues 61-73 (RKQKRKEKRKRKQ) show a composition bias toward basic residues. An SAM-dependent MTase TRM10-type domain is found at 88-279 (DRKRIRRDVV…TILPQRKGAV (192 aa)). Over residues 308-328 (EENRHELDSTHEEEKQDKENS) the composition is skewed to basic and acidic residues. Residues 329 to 338 (TESTVNSVPH) show a composition bias toward polar residues. S335 is modified (phosphoserine).

Belongs to the class IV-like SAM-binding methyltransferase superfamily. TRM10 family. Interacts with tRNA.

It is found in the nucleus. The protein resides in the nucleolus. The catalysed reaction is guanosine(9) in tRNA + S-adenosyl-L-methionine = N(1)-methylguanosine(9) in tRNA + S-adenosyl-L-homocysteine + H(+). Functionally, S-adenosyl-L-methionine-dependent guanine N(1)-methyltransferase that catalyzes the formation of N(1)-methylguanine at position 9 (m1G9) in tRNAs. Probably not able to catalyze formation of N(1)-methyladenine at position 9 (m1A9) in tRNAs. This Bos taurus (Bovine) protein is tRNA methyltransferase 10 homolog A (TRMT10A).